The primary structure comprises 158 residues: NAD(P)H-quinone oxidoreductase subunit N (158 aa).

The protein belongs to the complex I NdhN subunit family. NDH-1 can be composed of about 15 different subunits; different subcomplexes with different compositions have been identified which probably have different functions.

It is found in the cellular thylakoid membrane. The catalysed reaction is a plastoquinone + NADH + (n+1) H(+)(in) = a plastoquinol + NAD(+) + n H(+)(out). The enzyme catalyses a plastoquinone + NADPH + (n+1) H(+)(in) = a plastoquinol + NADP(+) + n H(+)(out). In terms of biological role, NDH-1 shuttles electrons from an unknown electron donor, via FMN and iron-sulfur (Fe-S) centers, to quinones in the respiratory and/or the photosynthetic chain. The immediate electron acceptor for the enzyme in this species is believed to be plastoquinone. Couples the redox reaction to proton translocation, and thus conserves the redox energy in a proton gradient. Cyanobacterial NDH-1 also plays a role in inorganic carbon-concentration. The sequence is that of NAD(P)H-quinone oxidoreductase subunit N from Cyanothece sp. (strain PCC 7425 / ATCC 29141).